Reading from the N-terminus, the 626-residue chain is Nuclear RNA export factor 1 (626 aa).

A compositionally biased stretch (basic and acidic residues) spans 1 to 16 (MADEGKSYSEHDDERV). The segment at 1-85 (MADEGKSYSE…TTRPNRRGDA (85 aa)) is disordered. At Ala-2 the chain carries N-acetylalanine. Residues 2–60 (ADEGKSYSEHDDERVNFPQRKKKGRGPFRWKYGEGNRRSGRGGSGIRSSRLEEDDGDVA) are minor non-specific RNA-binding. Residues 2–118 (ADEGKSYSEH…GTSQDGTSKN (117 aa)) form an RNA-binding (RBD) region. The interaction with ALYREF/THOC4 and LUZP4 stretch occupies residues 2 to 198 (ADEGKSYSEH…IIINPSAPPH (197 aa)). The residue at position 9 (Ser-9) is a Phosphoserine. Positions 20 to 29 (QRKKKGRGPF) are enriched in basic residues. Arg-42 is modified (asymmetric dimethylarginine; alternate). Arg-42 carries the post-translational modification Omega-N-methylarginine; alternate. Positions 61 to 118 (MSDAQDGPRVRYNPYTTRPNRRGDAWHDRDRIHVTVRRDRAPPERGGAGTSQDGTSKN) are major non-specific RNA-binding. The RNA binding stretch occupies residues 61–118 (MSDAQDGPRVRYNPYTTRPNRRGDAWHDRDRIHVTVRRDRAPPERGGAGTSQDGTSKN). The Nuclear localization signal signature appears at 67–100 (GPRVRYNPYTTRPNRRGDAWHDRDRIHVTVRRDR). Positions 83–110 (GDAWHDRDRIHVTVRRDRAPPERGGAGT) match the Nuclear export signal motif. Residues 119-198 (WFKITIPYGR…IIINPSAPPH (80 aa)) enclose the RRM domain. Tyr-126 is subject to 3'-nitrotyrosine. 4 LRR repeats span residues 266 to 291 (ELLSLNLSHNRLYRLDDMSSIVQKVP), 292 to 315 (NLKILNLSGNELKSERELDKIKGL), 316 to 350 (KLEELWLDGNSLCDTFRDQSTYIRSVVACVSAIRE), and 351 to 378 (RFPKLLRLDGHELPPPIAFDVEAPTTLP). The NTF2 domain occupies 393 to 543 (LVLHFLQQYY…LCIVNDELFV (151 aa)). A TAP-C domain is found at 572 to 626 (PEQQEMLQAFSTQSGMNLEWSQKCLQDNNWDYTRSAQAFTHLKAKGEIPEVAFMK).

It belongs to the NXF family. Heterodimer (via NTF2 domain) with NXT1. The formation of NXF1-NXT1 heterodimers is required for the NXF1-mediated nuclear mRNA export. Forms a complex with RANBP2/NUP358, NXT1 and RANGAP1. Associates with the exon junction complex (EJC) and with the transcription/export (TREX) complex. Found in a mRNA complex with UPF3A and UPF3B. Found in a post-splicing complex with RBM8A, UPF1, UPF2, UPF3A, UPF3B and RNPS1. Interacts (via N-terminus) with DHX9 (via N-terminus); this interaction is direct and negatively regulates NXF1-mediated nuclear export of constitutive transport element (CTE)-containing cellular mRNAs. Interacts with ALYREF/THOC4. Interacts with FYTTD1/UIF. Interacts with EIF4A3. Interacts with NUPL2. Interacts with THOC5. Interacts with CHTOP. Interacts with FRG1 (via N-terminus). Interacts with LUZP4. Interacts with FMR1; the interaction occurs in a mRNA-dependent and polyribosomes-independent manner in the nucleus. Interacts with CPSF6 (via N-terminus); this interaction is direct. Interacts with RBM15. Interacts with RBM15B. Interacts with MCM3AP; this interaction is not mediated by RNA.

The protein localises to the nucleus. Its subcellular location is the nucleoplasm. It is found in the nucleus speckle. The protein resides in the cytoplasm. Involved in the nuclear export of mRNA species bearing retroviral constitutive transport elements (CTE) and in the export of mRNA from the nucleus to the cytoplasm (TAP/NFX1 pathway). The NXF1-NXT1 heterodimer is involved in the export of HSP70 mRNA in conjunction with ALYREF/THOC4 and THOC5 components of the TREX complex. ALYREF/THOC4-bound mRNA is thought to be transferred to the NXF1-NXT1 heterodimer for export. Also involved in nuclear export of m6A-containing mRNAs: interaction between SRSF3 and YTHDC1 facilitates m6A-containing mRNA-binding to both SRSF3 and NXF1, promoting mRNA nuclear export. This is Nuclear RNA export factor 1 (NXF1) from Pongo abelii (Sumatran orangutan).